Consider the following 173-residue polypeptide: 2-C-methyl-D-erythritol 2,4-cyclodiphosphate synthase (173 aa).

Residues D17 and H19 each coordinate a divalent metal cation. 4-CDP-2-C-methyl-D-erythritol 2-phosphate is bound by residues 17–19 and 49–50; these read DVH and HS. An a divalent metal cation-binding site is contributed by H57. 4-CDP-2-C-methyl-D-erythritol 2-phosphate contacts are provided by residues 76 to 80, 147 to 150, and R157; these read FPNTD and TTTE.

Belongs to the IspF family. In terms of assembly, homotrimer. Requires a divalent metal cation as cofactor.

It catalyses the reaction 4-CDP-2-C-methyl-D-erythritol 2-phosphate = 2-C-methyl-D-erythritol 2,4-cyclic diphosphate + CMP. Its pathway is isoprenoid biosynthesis; isopentenyl diphosphate biosynthesis via DXP pathway; isopentenyl diphosphate from 1-deoxy-D-xylulose 5-phosphate: step 4/6. In terms of biological role, involved in the biosynthesis of isopentenyl diphosphate (IPP) and dimethylallyl diphosphate (DMAPP), two major building blocks of isoprenoid compounds. Catalyzes the conversion of 4-diphosphocytidyl-2-C-methyl-D-erythritol 2-phosphate (CDP-ME2P) to 2-C-methyl-D-erythritol 2,4-cyclodiphosphate (ME-CPP) with a corresponding release of cytidine 5-monophosphate (CMP). The sequence is that of 2-C-methyl-D-erythritol 2,4-cyclodiphosphate synthase from Ehrlichia ruminantium (strain Gardel).